Consider the following 695-residue polypeptide: Elongation factor G (695 aa).

Residues 10–285 (AKTRNIGIMA…AVIDYLPSPI (276 aa)) enclose the tr-type G domain. GTP contacts are provided by residues 19-26 (AHIDAGKT), 83-87 (DTPGH), and 137-140 (NKMD).

The protein belongs to the TRAFAC class translation factor GTPase superfamily. Classic translation factor GTPase family. EF-G/EF-2 subfamily.

It localises to the cytoplasm. Functionally, catalyzes the GTP-dependent ribosomal translocation step during translation elongation. During this step, the ribosome changes from the pre-translocational (PRE) to the post-translocational (POST) state as the newly formed A-site-bound peptidyl-tRNA and P-site-bound deacylated tRNA move to the P and E sites, respectively. Catalyzes the coordinated movement of the two tRNA molecules, the mRNA and conformational changes in the ribosome. The polypeptide is Elongation factor G (Limosilactobacillus reuteri (strain DSM 20016) (Lactobacillus reuteri)).